The sequence spans 274 residues: Protein RecA (274 aa).

Residue 43–50 coordinates ATP; the sequence is GPESSGKT.

The protein belongs to the RecA family.

It localises to the cytoplasm. Can catalyze the hydrolysis of ATP in the presence of single-stranded DNA, the ATP-dependent uptake of single-stranded DNA by duplex DNA, and the ATP-dependent hybridization of homologous single-stranded DNAs. It interacts with LexA causing its activation and leading to its autocatalytic cleavage. The protein is Protein RecA of Neisseria flavescens.